Reading from the N-terminus, the 122-residue chain is Acidic phospholipase A2 A' (122 aa).

Intrachain disulfides connect cysteine 26–cysteine 115, cysteine 28–cysteine 44, cysteine 43–cysteine 95, cysteine 49–cysteine 122, cysteine 50–cysteine 88, cysteine 57–cysteine 81, and cysteine 75–cysteine 86. The Ca(2+) site is built by tyrosine 27, glycine 29, and glycine 31. Histidine 47 is an active-site residue. Position 48 (aspartate 48) interacts with Ca(2+). The active site involves aspartate 89.

It belongs to the phospholipase A2 family. Group II subfamily. D49 sub-subfamily. Ca(2+) is required as a cofactor. As to expression, expressed by the venom gland.

Its subcellular location is the secreted. It carries out the reaction a 1,2-diacyl-sn-glycero-3-phosphocholine + H2O = a 1-acyl-sn-glycero-3-phosphocholine + a fatty acid + H(+). Functionally, PLA2 catalyzes the calcium-dependent hydrolysis of the 2-acyl groups in 3-sn-phosphoglycerides. This Gloydius halys (Chinese water mocassin) protein is Acidic phospholipase A2 A'.